The following is a 427-amino-acid chain: Serine hydroxymethyltransferase (427 aa).

(6S)-5,6,7,8-tetrahydrofolate is bound by residues Leu118 and 122 to 124 (GHL). Residue Lys227 is modified to N6-(pyridoxal phosphate)lysine. Residues Glu243 and 351-353 (SPF) each bind (6S)-5,6,7,8-tetrahydrofolate.

It belongs to the SHMT family. In terms of assembly, homodimer. The cofactor is pyridoxal 5'-phosphate.

The protein resides in the cytoplasm. The catalysed reaction is (6R)-5,10-methylene-5,6,7,8-tetrahydrofolate + glycine + H2O = (6S)-5,6,7,8-tetrahydrofolate + L-serine. The protein operates within one-carbon metabolism; tetrahydrofolate interconversion. It functions in the pathway amino-acid biosynthesis; glycine biosynthesis; glycine from L-serine: step 1/1. In terms of biological role, catalyzes the reversible interconversion of serine and glycine with tetrahydrofolate (THF) serving as the one-carbon carrier. This reaction serves as the major source of one-carbon groups required for the biosynthesis of purines, thymidylate, methionine, and other important biomolecules. Also exhibits THF-independent aldolase activity toward beta-hydroxyamino acids, producing glycine and aldehydes, via a retro-aldol mechanism. The sequence is that of Serine hydroxymethyltransferase from Thermotoga maritima (strain ATCC 43589 / DSM 3109 / JCM 10099 / NBRC 100826 / MSB8).